The following is a 124-amino-acid chain: UPF0212 protein Hlac_0869 (124 aa).

The protein belongs to the UPF0212 family.

This Halorubrum lacusprofundi (strain ATCC 49239 / DSM 5036 / JCM 8891 / ACAM 34) protein is UPF0212 protein Hlac_0869.